The sequence spans 397 residues: Phosphoglycerate kinase (397 aa).

Substrate-binding positions include 21-23, Arg36, 59-62, Arg119, and Arg156; these read DFN and HLGR. ATP contacts are provided by residues Lys207, Gly295, Glu326, and 353-356; that span reads GGDS.

It belongs to the phosphoglycerate kinase family. In terms of assembly, monomer.

The protein localises to the cytoplasm. It carries out the reaction (2R)-3-phosphoglycerate + ATP = (2R)-3-phospho-glyceroyl phosphate + ADP. Its pathway is carbohydrate degradation; glycolysis; pyruvate from D-glyceraldehyde 3-phosphate: step 2/5. The polypeptide is Phosphoglycerate kinase (Enterococcus faecalis (strain ATCC 700802 / V583)).